The chain runs to 1616 residues: MAYTQTATTSALLDTVRGNNSLVNDLAKRRLYDTAVEEFNARDRRPKVNFSKVISEEQTLIATRAYPEFQITFYNTQNAVHSLAGGLRSLELEYLMMQIPYGSLTYDIGGNFASHLFKGRAYVHCCMPNLDVRDIMRHEGQKDSIELYLSRLERGGKTVPNFQKEAFDRYAELPEDAVCHNTFQTMRHQPMQQSGRVYAIALHSIYDIPADEFGAALLRKNVHTCYAAFHFSENLLLEDSYVNLDEINACFSRDGDKLTFSFASESTLNYCHSYSNILKYVCKTYFPASNREVYMKEFLVTRVNTWFCKFSRIDTFLLYKGVAHKSVDSEQFYTAMEDAWHYKKTLAMCNSERILLEDSSSVNYWFPKMRDMVIVPLFDISLETSKRTRKEVLVSKDFVFTVLNHIRTYQAKALTYANVLSFVESIRSRVIINGVTARSEWDVDKSLLQSLSMTFYLHTKLAVLKDDLLISKFSLGSKTVCQHVWDEISLAFGNAFPSVKERLLNRKLIRVAGDALEIRVPDLYVTFHDRLVTEYKASVDMPALDIRKKMEETEVMYNALSELSVLRESDKFDVDVFSQMCQSLEVDPMTAAKVIVAVMSNESGLTLTFERPTEANVALALQDQEKASEGALVVTSREVEEPSMKGSMARGELQLAGLAGDHPESSYSRNEEIESLEQFHMATADSLIRKQMSSIVYTGPIKVQQMKNFIDSLVASLSAAVSNLVKILKDTAAIDLETRQKFGVLDVASRKWLIKPTAKSHAWGVVETHARKYHVALLEYDEQGVVTCDNWRRVAVSSESVVYSDMAKLRTLRRLLRNGEPHVSSAKVVLVDGVPGCGKTKEILSRVNFDEDLILVPGKQAAEMIRRRANSSGIIVATKDNVKTVDSFMMNFGKSTRCQFKRLFIDEGLMLHTGCVNFLVTMSLCEIAYVYGDTQQIPYINRVSGFPYPAHFAKLEVDEVETRRTTLRCPADVTHYLNRRYEGFVMSTSSVKKSVSQEMVGGAAVINPISKPLHGKILTFTQSDKEALLSRGYSDVHTVHEVQGETYSDVSLVRLTPTPVSIIAGDSPHVLVALSRHTCSLKYYTVVMDPLVSIIRDLEKLSSYLLDMYKVDAGTQXQLQIDSVFKGSNLFVATPKTGDISDMQFYYDKCLPGNSTMMNNFDAVTMRLTDISLNVKDCILDMSKSVAAPKDQIKPLIPMVRTAAEMPRQTGLLENLVAMIKRNFNAPELSGIIDIENTASLVVDKFFDSYLLKEKRKPNKNVSLFSRESLNRWLEKQEQVTIGQLADFDFVDLPAVDQYRHMIKAQPKQKLDTSIQTEYPALQTIVYHSKKINAIFGPLFSELTRQLLDSVDSSRFLFFTRKTPAQIEDFFGDLDSHVPMDVLELDISKYDKSQNEFHCAVEYEIWRRLGFEDFLGEVWKQGHRKTTLKDYTAGIKTCIWYQRKSGDVTTFIGNTVIIAACLASMLPMEKIIKGAFCGDDSLLYFPKGCEFPDVQHSANLMWNFEAKLFKKQYGYFCGRYVIHHDRGCIVYYDPLKLISKLGAKHIKDWEHLEEFRRSLCDVAVSLNNCAYYTQLDDAVWEVHKTAPPGSFVYKSLVKYLSDKVLFRSLFIDGSSC.

Residues 50–458 (FSKVISEEQT…QSLSMTFYLH (409 aa)) form a methyltransferase region. The Alphavirus-like MT domain maps to 72–281 (TFYNTQNAVH…HSYSNILKYV (210 aa)). A (+)RNA virus helicase ATP-binding domain is found at 801 to 963 (VVYSDMAKLR…KLEVDEVETR (163 aa)). A helicase region spans residues 830 to 1085 (LVDGVPGCGK…RHTCSLKYYT (256 aa)). An ATP-binding site is contributed by 833 to 840 (GVPGCGKT). The (+)RNA virus helicase C-terminal domain maps to 964–1116 (RTTLRCPADV…DMYKVDAGTQ (153 aa)). The region spanning 1380 to 1493 (MDVLELDISK…YFPKGCEFPD (114 aa)) is the RdRp catalytic domain.

This sequence belongs to the ssRNA positive-strand viruses RNA-directed RNA polymerase family. As to quaternary structure, heterodimer of a large and a small subunit.

The enzyme catalyses RNA(n) + a ribonucleoside 5'-triphosphate = RNA(n+1) + diphosphate. It catalyses the reaction ATP + H2O = ADP + phosphate + H(+). Its function is as follows. Is an RNA-dependent RNA polymerase active in viral RNA replication. Is a methyltransferase active in RNA capping and an RNA helicase. Methyltransferase displays a cytoplasmic capping enzyme activity. This function is necessary since all viral RNAs are synthesized in the cytoplasm, and host capping enzymes are restricted to the nucleus. Helicase region probably exhibits NTPase and RNA unwinding activities (Potential). It also acts as a suppressor of RNA-mediated gene silencing, also known as post-transcriptional gene silencing (PTGS), a mechanism of plant viral defense that limits the accumulation of viral RNAs. May mediate silencing suppression through either inhibition of HEN1-mediated siRNA or siRNA demethylation. The polypeptide is Replicase large subunit (Nicotiana tabacum (Common tobacco)).